A 283-amino-acid chain; its full sequence is Nucleoid occlusion protein (283 aa).

A DNA-binding region (H-T-H motif) is located at residues 148-167 (EALAQRLGKGQSTIANKLRL).

It belongs to the ParB family.

Its subcellular location is the cytoplasm. It localises to the nucleoid. Its function is as follows. Effects nucleoid occlusion by binding relatively nonspecifically to DNA and preventing the assembly of the division machinery in the vicinity of the nucleoid, especially under conditions that disturb the cell cycle. It helps to coordinate cell division and chromosome segregation by preventing the formation of the Z ring through the nucleoid, which would cause chromosome breakage. The polypeptide is Nucleoid occlusion protein (Bacillus licheniformis (strain ATCC 14580 / DSM 13 / JCM 2505 / CCUG 7422 / NBRC 12200 / NCIMB 9375 / NCTC 10341 / NRRL NRS-1264 / Gibson 46)).